Here is a 147-residue protein sequence, read N- to C-terminus: Ribonuclease H (147 aa).

The RNase H type-1 domain occupies 5–141 (ARKQITLYSD…CDELARNEAE (137 aa)). 4 residues coordinate Mg(2+): Asp14, Glu52, Asp74, and Asp133.

This sequence belongs to the RNase H family. Monomer. Mg(2+) serves as cofactor.

It localises to the cytoplasm. The enzyme catalyses Endonucleolytic cleavage to 5'-phosphomonoester.. In terms of biological role, endonuclease that specifically degrades the RNA of RNA-DNA hybrids. This chain is Ribonuclease H, found in Sulfurovum sp. (strain NBC37-1).